The sequence spans 572 residues: Putative two-component response regulator ARR13 (572 aa).

One can recognise a Response regulatory domain in the interval 17 to 134 (NVMVVDDNRV…DLPKIYQFAL (118 aa)). D71 carries the 4-aspartylphosphate modification. The segment at 175-225 (KKNCSSKSDTRTVNSTNVSHVSTNGSRKNRKRKPKGGPSDDGESLSQPPKK) is disordered. Over residues 179-197 (SSKSDTRTVNSTNVSHVST) the composition is skewed to polar residues. Positions 224 to 227 (KKKK) match the Nuclear localization signal motif. The segment at residues 227–277 (KIWWTNPLQDLFLQAIQHIGYDKVVPKKILAIMNVPYLTRENVASHLQKYR) is a DNA-binding region (myb-like GARP). A compositionally biased stretch (polar residues) spans 509 to 522 (NQDQSNGESSNTIA). A disordered region spans residues 509–531 (NQDQSNGESSNTIATPETNTPNF).

This sequence belongs to the ARR family. Type-B subfamily. As to quaternary structure, binds the target DNA as a monomer. Two-component system major event consists of a His-to-Asp phosphorelay between a sensor histidine kinase (HK) and a response regulator (RR). In plants, the His-to-Asp phosphorelay involves an additional intermediate named Histidine-containing phosphotransfer protein (HPt). This multistep phosphorelay consists of a His-Asp-His-Asp sequential transfer of a phosphate group between first a His and an Asp of the HK protein, followed by the transfer to a conserved His of the HPt protein and finally the transfer to an Asp in the receiver domain of the RR protein.

Its subcellular location is the nucleus. In terms of biological role, putative transcriptional activator that binds specifically to the DNA sequence 5'-[AG]GATT-3'. Functions as a response regulator involved in His-to-Asp phosphorelay signal transduction system. Phosphorylation of the Asp residue in the receiver domain activates the ability of the protein to promote the transcription of target genes. Could directly activate some type-A response regulators in response to cytokinins. The polypeptide is Putative two-component response regulator ARR13 (ARR13) (Arabidopsis thaliana (Mouse-ear cress)).